The primary structure comprises 271 residues: Probable iron transport system membrane protein HI_0359 (271 aa).

8 helical membrane-spanning segments follow: residues alanine 17–leucine 37, isoleucine 55–phenylalanine 75, threonine 93–isoleucine 113, serine 131–phenylalanine 151, valine 168–isoleucine 188, valine 194–leucine 214, methionine 221–tyrosine 241, and alanine 245–tyrosine 265.

Belongs to the ABC-3 integral membrane protein family.

The protein resides in the cell inner membrane. Functionally, part of an ATP-driven transport system HI_0359/HI_0360/HI_0361/HI_0362 for iron. This Haemophilus influenzae (strain ATCC 51907 / DSM 11121 / KW20 / Rd) protein is Probable iron transport system membrane protein HI_0359.